Consider the following 412-residue polypeptide: CCA-adding enzyme (412 aa).

Residues Ser-41 and Lys-44 each coordinate ATP. CTP is bound by residues Ser-41 and Lys-44. The Mg(2+) site is built by Asp-53, Asp-55, and Asp-106. 3 residues coordinate ATP: His-129, Lys-149, and Tyr-158. Positions 129, 149, and 158 each coordinate CTP.

The protein belongs to the tRNA nucleotidyltransferase/poly(A) polymerase family. Archaeal CCA-adding enzyme subfamily. In terms of assembly, homodimer. Mg(2+) serves as cofactor.

The enzyme catalyses a tRNA precursor + 2 CTP + ATP = a tRNA with a 3' CCA end + 3 diphosphate. The catalysed reaction is a tRNA with a 3' CCA end + 2 CTP + ATP = a tRNA with a 3' CCACCA end + 3 diphosphate. Functionally, catalyzes the addition and repair of the essential 3'-terminal CCA sequence in tRNAs without using a nucleic acid template. Adds these three nucleotides in the order of C, C, and A to the tRNA nucleotide-73, using CTP and ATP as substrates and producing inorganic pyrophosphate. tRNA 3'-terminal CCA addition is required both for tRNA processing and repair. Also involved in tRNA surveillance by mediating tandem CCA addition to generate a CCACCA at the 3' terminus of unstable tRNAs. While stable tRNAs receive only 3'-terminal CCA, unstable tRNAs are marked with CCACCA and rapidly degraded. The sequence is that of CCA-adding enzyme from Saccharolobus islandicus (strain M.16.27) (Sulfolobus islandicus).